A 461-amino-acid polypeptide reads, in one-letter code: Putative dipeptidase CPSG_01350 (461 aa).

Residues 1–10 (MSARDNEKGS) are compositionally biased toward basic and acidic residues. Residues 1–31 (MSARDNEKGSARSQPSHAAASEIENVPRPSR) form a disordered region. A helical transmembrane segment spans residues 35 to 52 (WTGTMIKVFIICACAGIV). Zn(2+) is bound by residues His90, Asp92, and Glu203. A disulfide bridge links Cys142 with Cys232. His230 contributes to the substrate binding site. Zn(2+) contacts are provided by His274 and His295. The substrate site is built by Arg306 and Asp366. Asn379 carries N-linked (GlcNAc...) asparagine glycosylation.

It belongs to the metallo-dependent hydrolases superfamily. Peptidase M19 family. It depends on Zn(2+) as a cofactor.

The protein localises to the membrane. It carries out the reaction an L-aminoacyl-L-amino acid + H2O = 2 an L-alpha-amino acid. Hydrolyzes a wide range of dipeptides. This is Putative dipeptidase CPSG_01350 from Coccidioides posadasii (strain RMSCC 757 / Silveira) (Valley fever fungus).